The primary structure comprises 461 residues: Trigger factor (461 aa).

The PPIase FKBP-type domain maps to 169 to 256 (GDTAVIDFAG…LKDLKIKELP (88 aa)). A disordered region spans residues 432–461 (PGEAIEPGSGEDAPPEVAAGATEPEAQPNS).

This sequence belongs to the FKBP-type PPIase family. Tig subfamily.

It localises to the cytoplasm. The catalysed reaction is [protein]-peptidylproline (omega=180) = [protein]-peptidylproline (omega=0). Functionally, involved in protein export. Acts as a chaperone by maintaining the newly synthesized protein in an open conformation. Functions as a peptidyl-prolyl cis-trans isomerase. This chain is Trigger factor, found in Gloeobacter violaceus (strain ATCC 29082 / PCC 7421).